The chain runs to 307 residues: Heparan sulfate glucosamine 3-O-sulfotransferase 1 (307 aa).

The N-terminal stretch at 1-20 is a signal peptide; sequence MAALLLGAVLLVAQPQLVPS. N-linked (GlcNAc...) asparagine glycosylation occurs at Asn-48. 3'-phosphoadenylyl sulfate contacts are provided by residues 64 to 68, Arg-147, and Ser-155; that span reads KGGTR. N-linked (GlcNAc...) asparagine glycans are attached at residues Asn-192, Asn-242, and Asn-249. 3'-phosphoadenylyl sulfate is bound at residue Tyr-255. Cysteines 256 and 265 form a disulfide. 270-274 is a binding site for 3'-phosphoadenylyl sulfate; it reads KGRAH.

This sequence belongs to the sulfotransferase 1 family. Highly expressed in the brain and kidney and weakly expressed in the heart, lung and placenta.

It is found in the golgi apparatus lumen. It carries out the reaction alpha-D-glucosaminyl-[heparan sulfate](n) + 3'-phosphoadenylyl sulfate = 3-sulfo-alpha-D-glucosaminyl-[heparan sulfate](n) + adenosine 3',5'-bisphosphate + H(+). Its function is as follows. Sulfotransferase that utilizes 3'-phospho-5'-adenylyl sulfate (PAPS) to catalyze the transfer of a sulfo group to position 3 of glucosamine residues in heparan. Catalyzes the rate limiting step in the biosynthesis of heparan sulfate (HSact). This modification is a crucial step in the biosynthesis of anticoagulant heparan sulfate as it completes the structure of the antithrombin pentasaccharide binding site. This chain is Heparan sulfate glucosamine 3-O-sulfotransferase 1 (HS3ST1), found in Homo sapiens (Human).